Here is a 472-residue protein sequence, read N- to C-terminus: MDYLPIFTKLENRPCLVVGGGSIACRKIHLLLKAGADVTVCALEFNPSLLKQAANKELKILEQAFTEELLENKWLVIAATNKKQVNEHIATAAHAKQLLVNVVGQADISSFILPSIVDRSPLVVAISSGGKAPVLARLIRERLETLLPMHLGRLAAISAQFRHRVKEVIKVAPLRRRYWEKLFGNGMLANLLQKGQTEKAIALMETSLSEDITQGDVALVGAGPGDPSLLTLKALQLMQQADVVLYDRLVSSDILDLVRRDADLISVGKAAGNHEVEQSRTNQMLVEFAREGKKVVRLKGGDSFIFGRGGEELEELVEAGIAFQVVPGITAASGCSAYAGIPLTHRDFAQSVTFVTGHRKTDGEELNWQALAAPNQTLVVYMGLIQSQEIQTQLLSHGRAPETPVALVNKGTTSDQHVVIGQLSELEQLGGGLQGPTLMIIGEVVNLADKLAWYQSDNKPPLSRDPFLVNLA.

Residues M1–M204 are precorrin-2 dehydrogenase /sirohydrochlorin ferrochelatase. Residues S22–I23 and L43–E44 contribute to the NAD(+) site. Position 128 is a phosphoserine (S128). Residues G215–A472 form a uroporphyrinogen-III C-methyltransferase region. P224 lines the S-adenosyl-L-methionine pocket. The Proton acceptor role is filled by D247. K269 (proton donor) is an active-site residue. S-adenosyl-L-methionine-binding positions include G300 to D302, I305, T330 to A331, M382, and G411.

This sequence in the N-terminal section; belongs to the precorrin-2 dehydrogenase / sirohydrochlorin ferrochelatase family. In the C-terminal section; belongs to the precorrin methyltransferase family.

It catalyses the reaction uroporphyrinogen III + 2 S-adenosyl-L-methionine = precorrin-2 + 2 S-adenosyl-L-homocysteine + H(+). The catalysed reaction is precorrin-2 + NAD(+) = sirohydrochlorin + NADH + 2 H(+). It carries out the reaction siroheme + 2 H(+) = sirohydrochlorin + Fe(2+). Its pathway is cofactor biosynthesis; adenosylcobalamin biosynthesis; precorrin-2 from uroporphyrinogen III: step 1/1. The protein operates within cofactor biosynthesis; adenosylcobalamin biosynthesis; sirohydrochlorin from precorrin-2: step 1/1. It participates in porphyrin-containing compound metabolism; siroheme biosynthesis; precorrin-2 from uroporphyrinogen III: step 1/1. It functions in the pathway porphyrin-containing compound metabolism; siroheme biosynthesis; siroheme from sirohydrochlorin: step 1/1. Its pathway is porphyrin-containing compound metabolism; siroheme biosynthesis; sirohydrochlorin from precorrin-2: step 1/1. Multifunctional enzyme that catalyzes the SAM-dependent methylations of uroporphyrinogen III at position C-2 and C-7 to form precorrin-2 via precorrin-1. Then it catalyzes the NAD-dependent ring dehydrogenation of precorrin-2 to yield sirohydrochlorin. Finally, it catalyzes the ferrochelation of sirohydrochlorin to yield siroheme. This is Siroheme synthase from Psychromonas ingrahamii (strain DSM 17664 / CCUG 51855 / 37).